The following is a 528-amino-acid chain: Tyrosine--tRNA ligase, cytoplasmic (528 aa).

At methionine 1 the chain carries N-acetylmethionine. Glycine 2 carries the post-translational modification N-acetylglycine; in Tyrosine--tRNA ligase, cytoplasmic, N-terminally processed. Position 39 (tyrosine 39) interacts with L-tyrosine. Tyrosine 39 is a binding site for trans-resveratrol. The 'HIGH' region motif lies at 44-52; it reads TTGKPHVAY. Residues tyrosine 166, glutamine 170, aspartate 173, and glutamine 188 each contribute to the L-tyrosine site. The trans-resveratrol site is built by glutamine 170 and aspartate 173. Lysine 197 carries the N6-acetyllysine modification. Phosphoserine is present on serine 205. Lysine 206 carries the N6-acetyllysine modification. The 'KMSKS' region motif lies at 222–226; it reads KMSSS. The short motif at 242–247 is the Nuclear localization signal element; that stretch reads KKKLKK. The disordered stretch occupies residues 339-363; the sequence is AAYPDPSKQKPPAKGPAKNSEPEEV. Residues 364–468 enclose the tRNA-binding domain; that stretch reads IPSRLDIRVG…AGSAPGERVF (105 aa). Position 386 is a phosphoserine (serine 386). N6-acetyllysine is present on residues lysine 474, lysine 482, and lysine 490.

It belongs to the class-I aminoacyl-tRNA synthetase family. In terms of assembly, homodimer. Interacts (when binding to resveratrol) with PARP1; interaction stimulates the poly-ADP-ribosyltransferase activity of PARP1.

It is found in the cytoplasm. The protein resides in the nucleus. It catalyses the reaction tRNA(Tyr) + L-tyrosine + ATP = L-tyrosyl-tRNA(Tyr) + AMP + diphosphate + H(+). Resveratrol strongly inhibits the tyrosine--tRNA ligase activity. Its function is as follows. Tyrosine--tRNA ligase that catalyzes the attachment of tyrosine to tRNA(Tyr) in a two-step reaction: tyrosine is first activated by ATP to form Tyr-AMP and then transferred to the acceptor end of tRNA(Tyr). Also acts as a positive regulator of poly-ADP-ribosylation in the nucleus, independently of its tyrosine--tRNA ligase activity. Activity is switched upon resveratrol-binding: resveratrol strongly inhibits the tyrosine--tRNA ligase activity and promotes relocalization to the nucleus, where YARS1 specifically stimulates the poly-ADP-ribosyltransferase activity of PARP1. The polypeptide is Tyrosine--tRNA ligase, cytoplasmic (Yars1) (Mus musculus (Mouse)).